Consider the following 1169-residue polypeptide: Protein MBD-R2 (1169 aa).

A THAP-type zinc finger spans residues 5-59 (CCVANCPSTSRLLEHNGVTYHSFPLDPIIRAIWIKNSRISLERQITKSVLVCSRH). Disordered stretches follow at residues 99–122 (RALQ…STND), 140–211 (SAER…KYSN), and 347–394 (AEEG…CAPQ). Positions 107–122 (EGTTETPGNAQSSTND) are enriched in polar residues. Residues 140 to 160 (SAERKATEEGKTGKAADDVKN) are compositionally biased toward basic and acidic residues. The span at 190-202 (PAPGSASSSNSPL) shows a compositional bias: low complexity. Residues 353–363 (KSPTPVGTPVS) show a composition bias toward polar residues. Residues 445-514 (KPTVIVQDWR…DVYDFSIHRR (70 aa)) form the MBD domain. Residues 527-565 (GYNPQPPPKPRPMDVSMNSTLDQSITSQHSLPSTPMPVK) form a disordered region. Over residues 542-559 (SMNSTLDQSITSQHSLPS) the composition is skewed to polar residues. A C2H2-type zinc finger spans residues 640–665 (YVCPREDCAKTYRKEDFLLIHIRHYH). The tract at residues 714 to 890 (QDLQQSRSFK…INAALAPPPA (177 aa)) is disordered. Over residues 726-742 (SVSATATSSTPSDITPT) the composition is skewed to low complexity. Polar residues predominate over residues 774 to 784 (PTQSFNPSLSR). The span at 798 to 810 (SGSRKSNRQRSQR) shows a compositional bias: basic residues. 2 stretches are compositionally biased toward polar residues: residues 853–862 (AATTPISSID) and 869–881 (SVST…QTDI).

Component of the non-specific lethal (NLS) histone acetyltransferase complex at least composed of mof, nls1, dgt1/NSL2, Rcd1/NSL3, Rcd5/MCRS2, MBD-R2 and wds.

Its subcellular location is the nucleus. The protein resides in the chromosome. Component of the non-specific lethal (NLS) complex, a multiprotein complex that promotes expression of housekeeping genes on X chromosome and autosomes. This is Protein MBD-R2 from Drosophila melanogaster (Fruit fly).